The following is a 317-amino-acid chain: 4-hydroxy-3-methylbut-2-enyl diphosphate reductase (317 aa).

Residue cysteine 12 coordinates [4Fe-4S] cluster. 2 residues coordinate (2E)-4-hydroxy-3-methylbut-2-enyl diphosphate: histidine 41 and histidine 74. Dimethylallyl diphosphate is bound by residues histidine 41 and histidine 74. 2 residues coordinate isopentenyl diphosphate: histidine 41 and histidine 74. A [4Fe-4S] cluster-binding site is contributed by cysteine 97. Histidine 125 is a binding site for (2E)-4-hydroxy-3-methylbut-2-enyl diphosphate. Histidine 125 lines the dimethylallyl diphosphate pocket. Histidine 125 is an isopentenyl diphosphate binding site. The active-site Proton donor is the glutamate 127. Threonine 168 is a binding site for (2E)-4-hydroxy-3-methylbut-2-enyl diphosphate. Residue cysteine 198 coordinates [4Fe-4S] cluster. (2E)-4-hydroxy-3-methylbut-2-enyl diphosphate is bound by residues serine 226, serine 227, asparagine 228, and serine 270. Dimethylallyl diphosphate contacts are provided by serine 226, serine 227, asparagine 228, and serine 270. Residues serine 226, serine 227, asparagine 228, and serine 270 each coordinate isopentenyl diphosphate.

Belongs to the IspH family. Homodimer. Requires [4Fe-4S] cluster as cofactor.

It carries out the reaction isopentenyl diphosphate + 2 oxidized [2Fe-2S]-[ferredoxin] + H2O = (2E)-4-hydroxy-3-methylbut-2-enyl diphosphate + 2 reduced [2Fe-2S]-[ferredoxin] + 2 H(+). It catalyses the reaction dimethylallyl diphosphate + 2 oxidized [2Fe-2S]-[ferredoxin] + H2O = (2E)-4-hydroxy-3-methylbut-2-enyl diphosphate + 2 reduced [2Fe-2S]-[ferredoxin] + 2 H(+). It functions in the pathway isoprenoid biosynthesis; dimethylallyl diphosphate biosynthesis; dimethylallyl diphosphate from (2E)-4-hydroxy-3-methylbutenyl diphosphate: step 1/1. It participates in isoprenoid biosynthesis; isopentenyl diphosphate biosynthesis via DXP pathway; isopentenyl diphosphate from 1-deoxy-D-xylulose 5-phosphate: step 6/6. Functionally, catalyzes the conversion of 1-hydroxy-2-methyl-2-(E)-butenyl 4-diphosphate (HMBPP) into a mixture of isopentenyl diphosphate (IPP) and dimethylallyl diphosphate (DMAPP). Acts in the terminal step of the DOXP/MEP pathway for isoprenoid precursor biosynthesis. This Yersinia enterocolitica serotype O:8 / biotype 1B (strain NCTC 13174 / 8081) protein is 4-hydroxy-3-methylbut-2-enyl diphosphate reductase.